Consider the following 290-residue polypeptide: Enoyl-CoA hydratase, mitochondrial (290 aa).

The N-terminal 29 residues, 1-29, are a transit peptide targeting the mitochondrion; sequence MAALRALLPRACNSLLSPVRCPEFRRFAS. 98–101 contributes to the substrate binding site; it reads ADIK. N6-acetyllysine; alternate is present on residues Lys-101 and Lys-115. N6-succinyllysine; alternate is present on residues Lys-101 and Lys-115. Residue Gly-141 coordinates substrate. N6-succinyllysine is present on Lys-204. Lys-211 is modified (N6-acetyllysine).

It belongs to the enoyl-CoA hydratase/isomerase family. In terms of assembly, homohexamer; dimer of trimers. Detected in liver (at protein level).

It is found in the mitochondrion matrix. It carries out the reaction a (3S)-3-hydroxyacyl-CoA = a (2E)-enoyl-CoA + H2O. The enzyme catalyses a (3E)-enoyl-CoA = a 4-saturated (2E)-enoyl-CoA. The catalysed reaction is (3E)-hexenoyl-CoA = (2E)-hexenoyl-CoA. It catalyses the reaction (3S)-3-hydroxybutanoyl-CoA = (2E)-butenoyl-CoA + H2O. It carries out the reaction 3-hydroxyisovaleryl-CoA = 3-methylbut-2-enoyl-CoA + H2O. The enzyme catalyses 3-hydroxypropanoyl-CoA = acryloyl-CoA + H2O. The catalysed reaction is 3-hydroxybutanoyl-CoA = (2E)-butenoyl-CoA + H2O. It catalyses the reaction 2-methylpropenoyl-CoA + H2O = (S)-3-hydroxyisobutanoyl-CoA. It carries out the reaction (3S)-hydroxyhexanoyl-CoA = (2E)-hexenoyl-CoA + H2O. The enzyme catalyses (3S)-hydroxydecanoyl-CoA = (2E)-decenoyl-CoA + H2O. Its pathway is lipid metabolism; fatty acid beta-oxidation. Converts unsaturated trans-2-enoyl-CoA species ((2E)-enoyl-CoA) to the corresponding 3(S)-3-hydroxyacyl-CoA species through addition of a water molecule to the double bond. Catalyzes the hydration of medium- and short-chained fatty enoyl-CoA thioesters from 4 carbons long (C4) up to C16. Has high substrate specificity for crotonyl-CoA ((2E)-butenoyl-CoA) and moderate specificity for acryloyl-CoA, 3-methylcrotonyl-CoA (3-methyl-(2E)-butenoyl-CoA) and methacrylyl-CoA ((2E)-2-methylpropenoyl-CoA). Can bind tiglyl-CoA (2-methylcrotonoyl-CoA), but hydrates only a small amount of this substrate. Plays a key role in the beta-oxidation spiral of short- and medium-chain fatty acid oxidation. At a lower rate than the hydratase reaction, catalyzes the isomerase reaction of trans-3-enoyl-CoA species (such as (3E)-hexenoyl-CoA) to trans-2-enoyl-CoA species (such as (2E)-hexenoyl-CoA), which are subsequently hydrated to 3(S)-3-hydroxyacyl-CoA species (such as (3S)-hydroxyhexanoyl-CoA). This Rattus norvegicus (Rat) protein is Enoyl-CoA hydratase, mitochondrial.